Consider the following 234-residue polypeptide: CHD1 helical C-terminal domain containing protein 1 (234 aa).

The disordered stretch occupies residues 1–38; sequence MEASDGQADEREEPLEQGTNARSLERRSSTTPAKDSLV. The interval 44–145 is CHD1 helical C-terminal domain (CHCT); sequence LDRDTFKICK…NNQTTKFLMA (102 aa). Residues 200 to 234 are disordered; that stretch reads LRARGPRRRGSKLPQEPKLKRRRIKEAPDTPETCL.

The protein localises to the cytoplasm. It is found in the nucleus. Functionally, may play a role in regulation of apoptosis. This is CHD1 helical C-terminal domain containing protein 1 (CHCT1) from Bos taurus (Bovine).